The following is a 108-amino-acid chain: MNDMTNIMKKAKEMQQKMQQIQDEMVNLKVTGTAGGGLVSITLNGQNIISEVKIDPSLIKPEESEILEDLIMAAHNEAKEKISTAMAEKTQNITAGLPIPPGFKLPFS.

Belongs to the YbaB/EbfC family. In terms of assembly, homodimer.

Its subcellular location is the cytoplasm. It localises to the nucleoid. Functionally, binds to DNA and alters its conformation. May be involved in regulation of gene expression, nucleoid organization and DNA protection. The sequence is that of Nucleoid-associated protein BARBAKC583_1239 from Bartonella bacilliformis (strain ATCC 35685 / KC583 / Herrer 020/F12,63).